The following is a 277-amino-acid chain: Nudix hydrolase 10 (277 aa).

One can recognise a Nudix hydrolase domain in the interval 97–235 (WIPEAESTIP…KNDLFKDIHH (139 aa)). Residues 142–163 (GVVDEGEEIFAAAIREVKEETG) carry the Nudix box motif. Residues Glu157 and Glu161 each contribute to the Mg(2+) site.

The protein belongs to the Nudix hydrolase family. Requires Mg(2+) as cofactor. It depends on Mn(2+) as a cofactor. In terms of tissue distribution, expressed in roots, stems and, at lower level, leaves.

It catalyses the reaction ADP-D-ribose + H2O = D-ribose 5-phosphate + AMP + 2 H(+). The enzyme catalyses NAD(+) + H2O = beta-nicotinamide D-ribonucleotide + AMP + 2 H(+). It carries out the reaction NADH + H2O = reduced beta-nicotinamide D-ribonucleotide + AMP + 2 H(+). May mediate the hydrolysis of some nucleoside diphosphate derivatives. In vitro, uses both ADP-ribose and NADH as substrates; however the relevance of such substrates in vivo is unclear. The polypeptide is Nudix hydrolase 10 (NUDT10) (Arabidopsis thaliana (Mouse-ear cress)).